The chain runs to 593 residues: Arylsulfatase D (593 aa).

An N-terminal signal peptide occupies residues 1–33 (MRSAARRGRAAPAARDSLPVLLFLCLLLKTCEP). Residues Asp49 and Asp50 each contribute to the Ca(2+) site. Asn61 carries an N-linked (GlcNAc...) asparagine glycan. Residue Cys89 coordinates Ca(2+). Residue Cys89 is the Nucleophile of the active site. Cys89 carries the 3-oxoalanine (Cys) modification. Asn128 carries an N-linked (GlcNAc...) asparagine glycan. Lys148 lines the substrate pocket. His150 is a catalytic residue. His304 is a binding site for substrate. N-linked (GlcNAc...) asparagine glycosylation occurs at Asn347. Ca(2+)-binding residues include Asp356 and His357. Lys381 is a binding site for substrate.

It belongs to the sulfatase family. Ca(2+) serves as cofactor. Post-translationally, the conversion to 3-oxoalanine (also known as C-formylglycine, FGly), of a serine or cysteine residue in prokaryotes and of a cysteine residue in eukaryotes, is critical for catalytic activity. As to expression, expressed in the pancreas, kidney, liver, lung, placenta, brain and heart.

The protein resides in the lysosome. This chain is Arylsulfatase D (ARSD), found in Homo sapiens (Human).